The primary structure comprises 20 residues: Pregnancy-associated glycoprotein 67A (20 aa).

2 N-linked (GlcNAc...) asparagine glycosylation sites follow: Asn4 and Asn20.

Belongs to the peptidase A1 family. As to expression, chorionic epithelium (trophectoderm) and placental cotyledons.

It localises to the secreted. The protein resides in the extracellular space. The sequence is that of Pregnancy-associated glycoprotein 67A from Bison bonasus (European bison).